We begin with the raw amino-acid sequence, 442 residues long: Histidine--tRNA ligase (442 aa).

This sequence belongs to the class-II aminoacyl-tRNA synthetase family. Homodimer.

The protein localises to the cytoplasm. It catalyses the reaction tRNA(His) + L-histidine + ATP = L-histidyl-tRNA(His) + AMP + diphosphate + H(+). This Helicobacter acinonychis (strain Sheeba) protein is Histidine--tRNA ligase.